The primary structure comprises 714 residues: Cyclomaltodextrin glucanotransferase (714 aa).

The signal sequence occupies residues 1 to 27; the sequence is MKSRYKRLTSLALSLSMALGISLPAWA. Residues 28-165 are A1; that stretch reads SPDTSVDNKV…NIKVVIDFAP (138 aa). Ca(2+) contacts are provided by D54, N59, N60, G78, and D80. 127–128 provides a ligand contact to substrate; it reads YW. N166 contributes to the Ca(2+) binding site. Residues 166–229 form a b region; it reads NHTSPADRDN…NLYDLADINH (64 aa). Substrate is bound at residue H167. A Ca(2+)-binding site is contributed by I217. 220-223 contacts substrate; sequence NLYD. D226 contacts Ca(2+). Positions 230-434 are A2; sequence NNNAMDAYFK…LRKSNPAIAY (205 aa). R254 provides a ligand contact to substrate. D256 functions as the Nucleophile in the catalytic mechanism. Residue 259–260 coordinates substrate; that stretch reads KH. H260 is a binding site for Ca(2+). Catalysis depends on E285, which acts as the Proton donor. Residues H355, D399, and R403 each contribute to the substrate site. Positions 435–523 are c; it reads GTTTERWVNN…GTAVWQYTAP (89 aa). The tract at residues 524–610 is d; that stretch reads ETSPAIGNVG…SNTFKSFNVL (87 aa). The 81-residue stretch at 527 to 607 folds into the IPT/TIG domain; the sequence is PAIGNVGPTM…GTASNTFKSF (81 aa). A CBM20 domain is found at 609-714; the sequence is VLTGDQVTVR…VGTVTVDWQN (106 aa). An e region spans residues 611 to 714; the sequence is TGDQVTVRFL…VGTVTVDWQN (104 aa).

This sequence belongs to the glycosyl hydrolase 13 family. As to quaternary structure, monomer. Ca(2+) serves as cofactor.

It is found in the secreted. The enzyme catalyses Cyclizes part of a (1-&gt;4)-alpha-D-glucan chain by formation of a (1-&gt;4)-alpha-D-glucosidic bond.. The polypeptide is Cyclomaltodextrin glucanotransferase (cgtM) (Paenibacillus macerans (Bacillus macerans)).